Consider the following 1960-residue polypeptide: MAQQAADKYLYVDKNFINNPLAQADWAAKKLVWVPSDKSGFEPASLKEEVGEEAIVELVENGKKVKVNKDDIQKMNPPKFSKVEDMAELTCLNEASVLHNLKEXYYSGLIYTYSGLFCVVINPYKNLPIYSEEIVEMYKGKKRHEMPPHIYAITDTAYRSMMQDREDQSILCTGESGAGKTENTKKVIQYLAHVASSHKSKKDQGELERQLLQANPILEAFGNAKTVKNDNSSRFGKFIRINFDVNGYIVGANIETYLLEKSRAIRQAKEERTFHIFYYLLSGAGEHLKTDLLLEPYNKYRFLSNGHVTIPGQQDKDMFQETMEAMRIMGIPEEEQMGLLRVISGVLQLGNIVFKKERNTDQASMPDNTAAQKVSHLLGINVTDFTRGILTPRIKVGRDYVQKAQTKEQADFAIEALAKATYERMFRWLVLRINKALDKTKRQGASFIGILDIAGFEIFDLNSFEQLCINYTNEKLQQLFNHTMFILEQEEYQREGIEWNFIDFGLDLQPCIDLIEKPAGPPGILALLDEECWFPKATDKSFVEKVVQEQGTHPKFQKPKQLKDKADFCIIHYAGKVDYKADEWLMKNMDPLNDNIATLLHQSSDKFVSELWKDVDRIIGLDQVAGMSETALPGAFKTRKGMFRTVGQLYKEQLAKLMATLRNTNPNFVRCIIPNHEKKAGKLDPHLVLDQLRCNGVLEGIRICRQGFPNRVVFQEFRQRYEILTPNSIPKGFMDGKQACVLMIKALELDSNLYRIGQSKVFFRAGVLAHLEEERDLKITDVIIGFQACCRGYLARKAFAKRQQQLTAMKVLQRNCAAYLKLRNWQWWRLFTKVKPLLQVSRQEEEMMAKEEELVKVREKQLAAENRLTEMETLQSQLMAEKLQLQEQLQAETELCAEAEELRARLTAKKQELEEICHDLEARVEEEEERCQHLQAEKKKMQQNIQELEEQLEEEESARQKLQLEKVTTEAKLKKLEEDQIIMEDQNCKLAKEKKLLEDRIAEFTTNLMEEEEKSKSLAKLKNKHEAMITDLEERLRREEKQRQELEKTRRKLEGDSTDLNDQIAELQAQIAELKMQLAKKEEELQAALARVEEEATQKNMALKKIRELESQISELQEDLESERASRNKAEKQKRDLGEELEALKTELEDTLDSTAAQQELRSKREQEVNILKKTLEEEARTHEAQIQEMRQKHSQAVEELAEQLEQTKRVKANLEKAKQTLENERGELANEVKVLQQGKGDSEHKRKKAEAQLQELQVKFTEGERVRTELADKVTKLQVELDNVMGLLTQSDSKSSKLTKDFSALESQLQDTQELLQEENRQKLSLSTKLKQMEDEKNSFKEQLEEEEEAKRNLEKQIATLHAQVTDMKKKMEDGVGCLETAEEAKRKLQKDLEGLGQRYEEKVAAYDKLEKTKTRLQQELDDLLVDLDHQRRTASNLEKKQKKFDQLLAEEKTISAKYAEERDRAEAEAREKETKALSLARALEEAMEQKAELERLNKQFRTEMEDLMSSKDDVGKSVHELEKSKRALEQQVEEMKTQLEELEDELQATEDAKLRLEVNLQAMKAQFERDLQGRDEQSEEKKKQLVRQVREMEAELEDEKKQRSMAVAARKKLEMDLKDLEAHIDSANKNRDEAIKQLRKLQAQMKDCVRELDDTRASREEILAQAKENEKKMKSMEAEMIQLQEELAAAERAKRQAQQERDELADEIANSSGKGALALEEKRRLEARIAQLEEELEEEQGNTELVNDRLKKANLQIDQINTDLNLERSHAQKNENARQQLERQNKELKVKLQEMEGTVKSKYKASITALEAKIAQLEEQLDNETKERQAACKQVRRAEKKLKDVLLQVDDERRNAEQFKDQADKASTRLKQLKRQLEEAEEEAQRANASRRKLQRELEDATETADAMNREVSSLKNKLRRGDLPFVVPRRVARKGAGDCSDEEVDGKADGAEAKAAE.

Ala-2 carries the N-acetylalanine modification. A mediates interaction with LIMCH1 region spans residues 2 to 838; that stretch reads AQQAADKYLY…RLFTKVKPLL (837 aa). Lys-8 carries the N6-acetyllysine modification. Tyr-11 is subject to Phosphotyrosine. Positions 27 to 77 constitute a Myosin N-terminal SH3-like domain; sequence AAKKLVWVPSDKSGFEPASLKEEVGEEAIVELVENGKKVKVNKDDIQKMNP. Residues 81-776 form the Myosin motor domain; it reads SKVEDMAELT…VLAHLEEERD (696 aa). At Lys-102 the chain carries N6-acetyllysine. Residue 174 to 181 coordinates ATP; it reads GESGAGKT. Lys-299, Lys-435, and Lys-613 each carry N6-acetyllysine. Ser-628 carries the phosphoserine modification. The actin-binding stretch occupies residues 654 to 676; sequence LAKLMATLRNTNPNFVRCIIPNH. Residue Tyr-754 is modified to Phosphotyrosine. The region spanning 779 to 808 is the IQ domain; it reads ITDVIIGFQACCRGYLARKAFAKRQQQLTA. A coiled-coil region spans residues 837 to 1926; it reads LLQVSRQEEE…LKNKLRRGDL (1090 aa). At Lys-850 the chain carries N6-succinyllysine. 3 positions are modified to N6-acetyllysine: Lys-860, Lys-975, and Lys-1024. Ser-1114 is subject to Phosphoserine. The tract at residues 1117–1137 is disordered; the sequence is QEDLESERASRNKAEKQKRDL. Over residues 1122–1137 the composition is skewed to basic and acidic residues; that stretch reads SERASRNKAEKQKRDL. Lys-1234, Lys-1249, Lys-1357, Lys-1392, Lys-1404, Lys-1410, Lys-1459, and Lys-1638 each carry N6-acetyllysine. An N6-succinyllysine modification is found at Lys-1669. Ser-1714 is subject to Phosphoserine. 3 positions are modified to N6-acetyllysine: Lys-1793, Lys-1802, and Lys-1845. The segment at 1877–1918 is disordered; that stretch reads RQLEEAEEEAQRANASRRKLQRELEDATETADAMNREVSSLK. The residue at position 1923 (Arg-1923) is an Omega-N-methylarginine. A disordered region spans residues 1934–1960; sequence VARKGAGDCSDEEVDGKADGAEAKAAE. The residue at position 1943 (Ser-1943) is a Phosphoserine. A compositionally biased stretch (basic and acidic residues) spans 1948 to 1960; sequence DGKADGAEAKAAE.

The protein belongs to the TRAFAC class myosin-kinesin ATPase superfamily. Myosin family. Myosin is a hexameric protein that consists of 2 heavy chain subunits (MHC), 2 alkali light chain subunits (MLC) and 2 regulatory light chain subunits (MLC-2). Interacts with RASIP1. Interacts with DDR1. Interacts with PDLIM2. Interacts with SVIL. Interacts with HTRA3. Interacts with Myo7a. Interacts with CFAP95. Interacts with LIMCH1; independently of the integration of MYH9 into the myosin complex. Interacts with RAB3A. Interacts with ZBED4. Interacts with S100A4; this interaction increases cell motility. In terms of processing, ISGylated. Ubiquitination.

Its subcellular location is the cytoplasm. It is found in the cytoskeleton. The protein resides in the cell cortex. It localises to the cytoplasmic vesicle. The protein localises to the secretory vesicle. Its subcellular location is the cortical granule. Functionally, cellular myosin that appears to play a role in cytokinesis, cell shape, and specialized functions such as secretion and capping. Required for cortical actin clearance prior to oocyte exocytosis. Promotes cell motility in conjunction with S100A4. During cell spreading, plays an important role in cytoskeleton reorganization, focal contact formation (in the margins but not the central part of spreading cells), and lamellipodial retraction; this function is mechanically antagonized by MYH10. The protein is Myosin-9 (MYH9) of Canis lupus familiaris (Dog).